The primary structure comprises 510 residues: NAD(P)H-quinone oxidoreductase subunit 2 B, chloroplastic (510 aa).

14 helical membrane-spanning segments follow: residues 31 to 51 (FIFPECILIFGLILLLMIDLT), 59 to 79 (WFYFISSTSLVISITALLFRW), 99 to 119 (IFQFLILLCSTLCIPLSVEYI), 124 to 144 (MAITEFLLFVLTATLGGMFLC), 149 to 169 (LITIFVALECFSLCSYLLSGY), 184 to 204 (LLMGGASSSILVYGFSWLYGL), 229 to 249 (ISIALIFITVGLGFKLSLAPF), 261 to 281 (PTPVVAFLSVTSKVAALALAT), 295 to 315 (WHLLLEILAILSMILGNLLAI), 323 to 343 (MLAYSSIGQIGYVIIGIIVGD), 354 to 374 (YMLFYISMNLGTFACIVLFGL), 395 to 415 (ALSLALCLLSLGGLPPLAGFF), 418 to 438 (LYLFWCGWQAGLYFLVSIGLL), and 484 to 504 (MTVCVIASTILGISMNPILAI).

The protein belongs to the complex I subunit 2 family. NDH is composed of at least 16 different subunits, 5 of which are encoded in the nucleus.

It localises to the plastid. The protein localises to the chloroplast thylakoid membrane. It carries out the reaction a plastoquinone + NADH + (n+1) H(+)(in) = a plastoquinol + NAD(+) + n H(+)(out). It catalyses the reaction a plastoquinone + NADPH + (n+1) H(+)(in) = a plastoquinol + NADP(+) + n H(+)(out). Its function is as follows. NDH shuttles electrons from NAD(P)H:plastoquinone, via FMN and iron-sulfur (Fe-S) centers, to quinones in the photosynthetic chain and possibly in a chloroplast respiratory chain. The immediate electron acceptor for the enzyme in this species is believed to be plastoquinone. Couples the redox reaction to proton translocation, and thus conserves the redox energy in a proton gradient. This chain is NAD(P)H-quinone oxidoreductase subunit 2 B, chloroplastic, found in Hordeum vulgare (Barley).